Here is a 128-residue protein sequence, read N- to C-terminus: Aspartate 1-decarboxylase (128 aa).

Catalysis depends on S25, which acts as the Schiff-base intermediate with substrate; via pyruvic acid. S25 is modified (pyruvic acid (Ser)). T57 is a binding site for substrate. Y58 (proton donor) is an active-site residue. 73–75 (GSA) provides a ligand contact to substrate.

The protein belongs to the PanD family. In terms of assembly, heterooctamer of four alpha and four beta subunits. It depends on pyruvate as a cofactor. Post-translationally, is synthesized initially as an inactive proenzyme, which is activated by self-cleavage at a specific serine bond to produce a beta-subunit with a hydroxyl group at its C-terminus and an alpha-subunit with a pyruvoyl group at its N-terminus.

It localises to the cytoplasm. It carries out the reaction L-aspartate + H(+) = beta-alanine + CO2. It functions in the pathway cofactor biosynthesis; (R)-pantothenate biosynthesis; beta-alanine from L-aspartate: step 1/1. Functionally, catalyzes the pyruvoyl-dependent decarboxylation of aspartate to produce beta-alanine. The chain is Aspartate 1-decarboxylase from Burkholderia multivorans (strain ATCC 17616 / 249).